The primary structure comprises 360 residues: Aminomethyltransferase (360 aa).

Belongs to the GcvT family. The glycine cleavage system is composed of four proteins: P, T, L and H.

It catalyses the reaction N(6)-[(R)-S(8)-aminomethyldihydrolipoyl]-L-lysyl-[protein] + (6S)-5,6,7,8-tetrahydrofolate = N(6)-[(R)-dihydrolipoyl]-L-lysyl-[protein] + (6R)-5,10-methylene-5,6,7,8-tetrahydrofolate + NH4(+). The glycine cleavage system catalyzes the degradation of glycine. The protein is Aminomethyltransferase of Methylococcus capsulatus (strain ATCC 33009 / NCIMB 11132 / Bath).